The chain runs to 237 residues: Phosphoribosylaminoimidazole-succinocarboxamide synthase (237 aa).

It belongs to the SAICAR synthetase family.

It carries out the reaction 5-amino-1-(5-phospho-D-ribosyl)imidazole-4-carboxylate + L-aspartate + ATP = (2S)-2-[5-amino-1-(5-phospho-beta-D-ribosyl)imidazole-4-carboxamido]succinate + ADP + phosphate + 2 H(+). It functions in the pathway purine metabolism; IMP biosynthesis via de novo pathway; 5-amino-1-(5-phospho-D-ribosyl)imidazole-4-carboxamide from 5-amino-1-(5-phospho-D-ribosyl)imidazole-4-carboxylate: step 1/2. The protein is Phosphoribosylaminoimidazole-succinocarboxamide synthase of Deinococcus radiodurans (strain ATCC 13939 / DSM 20539 / JCM 16871 / CCUG 27074 / LMG 4051 / NBRC 15346 / NCIMB 9279 / VKM B-1422 / R1).